A 129-amino-acid polypeptide reads, in one-letter code: Small ribosomal subunit protein uS8 (129 aa).

The protein belongs to the universal ribosomal protein uS8 family. Part of the 30S ribosomal subunit.

One of the primary rRNA binding proteins, it binds directly to 16S rRNA central domain where it helps coordinate assembly of the platform of the 30S subunit. The sequence is that of Small ribosomal subunit protein uS8 from Archaeoglobus fulgidus (strain ATCC 49558 / DSM 4304 / JCM 9628 / NBRC 100126 / VC-16).